A 776-amino-acid chain; its full sequence is LPS-assembly protein LptD (776 aa).

The N-terminal stretch at 1 to 24 (MQHFSRTFLAASIATALFAPYAQA) is a signal peptide.

It belongs to the LptD family. Component of the lipopolysaccharide transport and assembly complex. Interacts with LptE and LptA.

The protein resides in the cell outer membrane. Together with LptE, is involved in the assembly of lipopolysaccharide (LPS) at the surface of the outer membrane. This is LPS-assembly protein LptD from Vibrio vulnificus (strain CMCP6).